Consider the following 287-residue polypeptide: Thymidylate synthase (287 aa).

A dUMP-binding site is contributed by arginine 21. Residue histidine 51 coordinates (6R)-5,10-methylene-5,6,7,8-tetrahydrofolate. 150–151 (RR) provides a ligand contact to dUMP. Cysteine 170 acts as the Nucleophile in catalysis. DUMP contacts are provided by residues 190–193 (RSGD), asparagine 201, and 231–233 (HIY). Residue aspartate 193 participates in (6R)-5,10-methylene-5,6,7,8-tetrahydrofolate binding. Alanine 286 is a (6R)-5,10-methylene-5,6,7,8-tetrahydrofolate binding site.

It belongs to the thymidylate synthase family. Bacterial-type ThyA subfamily. In terms of assembly, homodimer.

It is found in the cytoplasm. It carries out the reaction dUMP + (6R)-5,10-methylene-5,6,7,8-tetrahydrofolate = 7,8-dihydrofolate + dTMP. It functions in the pathway pyrimidine metabolism; dTTP biosynthesis. Functionally, catalyzes the reductive methylation of 2'-deoxyuridine-5'-monophosphate (dUMP) to 2'-deoxythymidine-5'-monophosphate (dTMP) while utilizing 5,10-methylenetetrahydrofolate (mTHF) as the methyl donor and reductant in the reaction, yielding dihydrofolate (DHF) as a by-product. This enzymatic reaction provides an intracellular de novo source of dTMP, an essential precursor for DNA biosynthesis. The sequence is that of Thymidylate synthase from Mycoplasma pneumoniae (strain ATCC 29342 / M129 / Subtype 1) (Mycoplasmoides pneumoniae).